Reading from the N-terminus, the 302-residue chain is 4-hydroxy-tetrahydrodipicolinate synthase (302 aa).

Pyruvate is bound at residue Thr-56. Tyr-145 serves as the catalytic Proton donor/acceptor. Lys-173 serves as the catalytic Schiff-base intermediate with substrate. Residue Val-215 coordinates pyruvate.

Belongs to the DapA family. In terms of assembly, homotetramer; dimer of dimers.

Its subcellular location is the cytoplasm. The catalysed reaction is L-aspartate 4-semialdehyde + pyruvate = (2S,4S)-4-hydroxy-2,3,4,5-tetrahydrodipicolinate + H2O + H(+). It participates in amino-acid biosynthesis; L-lysine biosynthesis via DAP pathway; (S)-tetrahydrodipicolinate from L-aspartate: step 3/4. Catalyzes the condensation of (S)-aspartate-beta-semialdehyde [(S)-ASA] and pyruvate to 4-hydroxy-tetrahydrodipicolinate (HTPA). The polypeptide is 4-hydroxy-tetrahydrodipicolinate synthase (Prochlorococcus marinus subsp. pastoris (strain CCMP1986 / NIES-2087 / MED4)).